The following is a 621-amino-acid chain: Chaperone protein HtpG (621 aa).

The interval 1-328 is a; substrate-binding; sequence MKQEKKKFDA…SEDLPLNISR (328 aa). The tract at residues 329-544 is b; the sequence is ESLQHNNVLE…EAAMDIRMER (216 aa). A disordered region spans residues 479-498; the sequence is VDQATSSSEEKNKDDKKSDD. Residues 486–498 show a composition bias toward basic and acidic residues; it reads SEEKNKDDKKSDD. The tract at residues 545 to 621 is c; sequence FLIEQKQIAN…LNDIVQKAIL (77 aa).

It belongs to the heat shock protein 90 family. As to quaternary structure, homodimer.

It localises to the cytoplasm. Molecular chaperone. Has ATPase activity. The protein is Chaperone protein HtpG of Rickettsia bellii (strain OSU 85-389).